The sequence spans 801 residues: Phenylalanine--tRNA ligase beta subunit (801 aa).

The tRNA-binding domain maps to 39–153 (ADGLSKLVVG…EEAVPGDAIF (115 aa)). Residues 406–481 (TEPVEVSTSL…RIYGYDKLPT (76 aa)) enclose the B5 domain. Positions 459, 465, 468, and 469 each coordinate Mg(2+). Positions 708–801 (TKFPAMTRDV…LTEQVGAEVR (94 aa)) constitute an FDX-ACB domain.

This sequence belongs to the phenylalanyl-tRNA synthetase beta subunit family. Type 1 subfamily. In terms of assembly, tetramer of two alpha and two beta subunits. It depends on Mg(2+) as a cofactor.

It localises to the cytoplasm. The catalysed reaction is tRNA(Phe) + L-phenylalanine + ATP = L-phenylalanyl-tRNA(Phe) + AMP + diphosphate + H(+). The protein is Phenylalanine--tRNA ligase beta subunit of Streptococcus pyogenes serotype M1.